The chain runs to 557 residues: Protein PECTIC ARABINOGALACTAN SYNTHESIS-RELATED (557 aa).

The interval 1-54 is disordered; it reads MAELRHSSSLGSRSSSSPLRAAGDEDSSSPHVHDHSPNGGDDEDGRPRHPSRDR. The Cytoplasmic segment spans residues 1 to 79; the sequence is MAELRHSSSL…DPRVSPQKNK (79 aa). A compositionally biased stretch (low complexity) spans 7-20; it reads SSSLGSRSSSSPLR. Positions 45–54 are enriched in basic and acidic residues; that stretch reads GRPRHPSRDR. Residues 80–100 traverse the membrane as a helical; Signal-anchor for type II membrane protein segment; the sequence is ISLLLILILAIASLISVYGII. The Lumenal portion of the chain corresponds to 101-557; the sequence is NHLNAPYLCK…NPLTPCMCKA (457 aa). N-linked (GlcNAc...) asparagine glycans are attached at residues asparagine 156, asparagine 188, and asparagine 324. 336-338 lines the substrate pocket; that stretch reads HLR. N-linked (GlcNAc...) asparagine glycosylation is present at asparagine 375.

Belongs to the glycosyltransferase GT106 family. As to expression, widely expressed with the highest expression in reproductive tissues and roots.

The protein localises to the golgi apparatus membrane. Its pathway is glycan metabolism; pectin biosynthesis. Functionally, glycosyltransferase involved in the biosynthesis of pectic type-II arabinogalactans. The protein is Protein PECTIC ARABINOGALACTAN SYNTHESIS-RELATED of Arabidopsis thaliana (Mouse-ear cress).